The sequence spans 165 residues: Ecotin-like protein 4 (165 aa).

It belongs to the protease inhibitor I11 (ecotin) family.

The protein is Ecotin-like protein 4 of Trypanosoma brucei brucei (strain 927/4 GUTat10.1).